We begin with the raw amino-acid sequence, 645 residues long: Phosphomethylpyrimidine synthase (645 aa).

Polar residues predominate over residues 1–12 (MSHNTVIPTTDI). The segment at 1–25 (MSHNTVIPTTDISPKPDPARPRKAQ) is disordered. Substrate contacts are provided by residues Asn-253, Met-282, Tyr-311, His-347, 367–369 (SRG), 408–411 (DGLR), and Glu-447. A Zn(2+)-binding site is contributed by His-451. Tyr-474 serves as a coordination point for substrate. His-515 is a Zn(2+) binding site. [4Fe-4S] cluster contacts are provided by Cys-595, Cys-598, and Cys-603.

It belongs to the ThiC family. Homodimer. It depends on [4Fe-4S] cluster as a cofactor.

It catalyses the reaction 5-amino-1-(5-phospho-beta-D-ribosyl)imidazole + S-adenosyl-L-methionine = 4-amino-2-methyl-5-(phosphooxymethyl)pyrimidine + CO + 5'-deoxyadenosine + formate + L-methionine + 3 H(+). The protein operates within cofactor biosynthesis; thiamine diphosphate biosynthesis. Catalyzes the synthesis of the hydroxymethylpyrimidine phosphate (HMP-P) moiety of thiamine from aminoimidazole ribotide (AIR) in a radical S-adenosyl-L-methionine (SAM)-dependent reaction. The sequence is that of Phosphomethylpyrimidine synthase from Photorhabdus laumondii subsp. laumondii (strain DSM 15139 / CIP 105565 / TT01) (Photorhabdus luminescens subsp. laumondii).